The following is a 151-amino-acid chain: D-aminoacyl-tRNA deacylase (151 aa).

The short motif at 136 to 137 (GP) is the Gly-cisPro motif, important for rejection of L-amino acids element.

It belongs to the DTD family. As to quaternary structure, homodimer.

It is found in the cytoplasm. The enzyme catalyses glycyl-tRNA(Ala) + H2O = tRNA(Ala) + glycine + H(+). It catalyses the reaction a D-aminoacyl-tRNA + H2O = a tRNA + a D-alpha-amino acid + H(+). Functionally, an aminoacyl-tRNA editing enzyme that deacylates mischarged D-aminoacyl-tRNAs. Also deacylates mischarged glycyl-tRNA(Ala), protecting cells against glycine mischarging by AlaRS. Acts via tRNA-based rather than protein-based catalysis; rejects L-amino acids rather than detecting D-amino acids in the active site. By recycling D-aminoacyl-tRNA to D-amino acids and free tRNA molecules, this enzyme counteracts the toxicity associated with the formation of D-aminoacyl-tRNA entities in vivo and helps enforce protein L-homochirality. The sequence is that of D-aminoacyl-tRNA deacylase from Streptococcus gordonii (strain Challis / ATCC 35105 / BCRC 15272 / CH1 / DL1 / V288).